The following is a 435-amino-acid chain: 3-ketoacyl-CoA thiolase (435 aa).

Cysteine 98 functions as the Acyl-thioester intermediate in the catalytic mechanism. Residues histidine 391 and cysteine 421 each act as proton acceptor in the active site.

It belongs to the thiolase-like superfamily. Thiolase family. As to quaternary structure, heterotetramer of two alpha chains (FadJ) and two beta chains (FadI).

Its subcellular location is the cytoplasm. It catalyses the reaction an acyl-CoA + acetyl-CoA = a 3-oxoacyl-CoA + CoA. It participates in lipid metabolism; fatty acid beta-oxidation. Functionally, catalyzes the final step of fatty acid oxidation in which acetyl-CoA is released and the CoA ester of a fatty acid two carbons shorter is formed. The chain is 3-ketoacyl-CoA thiolase from Vibrio cholerae serotype O1 (strain ATCC 39541 / Classical Ogawa 395 / O395).